A 593-amino-acid chain; its full sequence is Inactive metallocarboxypeptidase ECM14 (593 aa).

Positions 1–22 (MHVTVQLSLLLSLASSLPLVSA) are cleaved as a signal peptide. Residues 23 to 175 (IPQHDGQAYT…QAIYESYPKN (153 aa)) constitute a propeptide that is removed on maturation. 2 disordered regions span residues 75–98 (VPQR…KAPA) and 172–202 (YPKN…SQPH). A compositionally biased stretch (basic and acidic residues) spans 78–88 (RGKDSETKTGK). Residues 188-199 (RRFSPSASTPES) are compositionally biased toward polar residues. The region spanning 211–537 (DYQPLSVLLP…HAVVAMGKFL (327 aa)) is the Peptidase M14 domain. Zn(2+) is bound by residues His-276 and Glu-279. Substrate-binding positions include 276 to 279 (HARE), Arg-334, and 351 to 352 (DR). Cysteines 345 and 368 form a disulfide. Residue Asn-361 is glycosylated (N-linked (GlcNAc...) asparagine). His-408 provides a ligand contact to Zn(2+). 409–410 (SY) serves as a coordination point for substrate. Residues 548–593 (DEPHAGEQTQDNSYDEDGDNLFRAQGGDPQVRFTRRNIGAHDDDSE) are disordered.

This sequence belongs to the peptidase M14 family. Zn(2+) serves as cofactor.

It is found in the vacuole. It localises to the secreted. Inactive carboxypeptidase that may play a role in cell wall organization and biogenesis. This is Inactive metallocarboxypeptidase ECM14 (ECM14) from Arthroderma otae (strain ATCC MYA-4605 / CBS 113480) (Microsporum canis).